Here is a 2556-residue protein sequence, read N- to C-terminus: Non-reducing polyketide synthase tazA (2556 aa).

An N-terminal acylcarrier protein transacylase domain (SAT) region spans residues 16–270 (LFGPQALSFT…QAIGLRGRFH (255 aa)). The Nucleophile; for transacylase activity role is filled by Cys143. Residue His270 is the Proton donor/acceptor; for transacylase activity of the active site. A Ketosynthase family 3 (KS3) domain is found at 397 to 769 (EDEIAVIGMA…GSNASMIVTQ (373 aa)). The malonyl-CoA:ACP transacylase (MAT) domain stretch occupies residues 876 to 1209 (CFGGQISRFV…WAHHCTQAPA (334 aa)). The tract at residues 1254–1383 (YTFVGYQDEG…GQIIFQSAAE (130 aa)) is N-terminal hotdog fold. The PKS/mFAS DH domain occupies 1254–1560 (YTFVGYQDEG…YSRLPKSTMS (307 aa)). The tract at residues 1257–1564 (VGYQDEGKRQ…PKSTMSKMLT (308 aa)) is product template (PT) domain. His1285 functions as the Proton acceptor; for dehydratase activity in the catalytic mechanism. The C-terminal hotdog fold stretch occupies residues 1408-1560 (DPDDVLQGRN…YSRLPKSTMS (153 aa)). Asp1465 serves as the catalytic Proton donor; for dehydratase activity. The interval 1567–1621 (TAPSERRAQVDSPSMPASINAPPSASEQAPVEPAPQTKESAPIAEPGAGGQSNSK) is disordered. Residues 1577-1593 (DSPSMPASINAPPSASE) are compositionally biased toward polar residues. The Carrier domain occupies 1620-1694 (SKVPGIVVEV…DVVQCVHKTL (75 aa)). Ser1654 is modified (O-(pantetheine 4'-phosphoryl)serine). The interval 1700–1731 (SAAQESEGNLTPASSGTQSPRSDPVSDTSLSD) is disordered. Residues 1702–1731 (AQESEGNLTPASSGTQSPRSDPVSDTSLSD) are compositionally biased toward polar residues. A methyltransferase domain region spans residues 1830-2107 (LEHEGRLIDI…DWTDGHLAEN (278 aa)). The tract at residues 2180–2424 (VTGATGSLGA…WTPVDVVAST (245 aa)) is NADPH-binding (R) domain.

Pantetheine 4'-phosphate is required as a cofactor.

It participates in secondary metabolite biosynthesis. Non-reducing polyketide synthase; part of the gene cluster that mediates the biosynthesis of azaterrilone A and other azaphilones, a class of fungal metabolites characterized by a highly oxygenated pyrano-quinone bicyclic core and exhibiting a broad range of bioactivities. The first step of the pathway begins with tazA that assembles one acetyl-CoA starter unit, five malonyl-CoA units, and catalyzes a series of Claisen condensations, methylation, PT-mediated cyclization, and finally releases the first hexaketide precursor through the R-domain. The tazA product then undergoes reduction on its terminal ketone and the following pyran-ring formation by yet undetermined enzyme(s). Dehydration and enoyl reduction, possibly involving the trans-enoyl reductase tazE leads to the next intermediate. TazD is predicted as an acetyltransferase and might catalyze the acetylation steps leading to the synthesis of azaterrilone A. Azaterrilone A is not the final product of the taz pathway and both the highly reducing polyketide synthase tazB and the dual enzyme tazHJ catalyze late steps of the pathway, leading to the production of the 2 final stereoisomers that contain additional polyketide modification whose structures have still to be determined. The polypeptide is Non-reducing polyketide synthase tazA (Aspergillus terreus (strain NIH 2624 / FGSC A1156)).